The primary structure comprises 152 residues: Peptide deformylase (152 aa).

Residues Cys-91 and His-133 each coordinate Fe cation. Glu-134 is an active-site residue. His-137 is a Fe cation binding site.

This sequence belongs to the polypeptide deformylase family. It depends on Fe(2+) as a cofactor.

It carries out the reaction N-terminal N-formyl-L-methionyl-[peptide] + H2O = N-terminal L-methionyl-[peptide] + formate. Its function is as follows. Removes the formyl group from the N-terminal Met of newly synthesized proteins. Requires at least a dipeptide for an efficient rate of reaction. N-terminal L-methionine is a prerequisite for activity but the enzyme has broad specificity at other positions. This is Peptide deformylase from Wigglesworthia glossinidia brevipalpis.